Consider the following 246-residue polypeptide: NAD-dependent protein deacylase (246 aa).

The region spanning 1–237 (MSLPYRHVVI…PRLVEEILAA (237 aa)) is the Deacetylase sirtuin-type domain. 13–32 (GAGISAESGIQTFRAQDGLW) serves as a coordination point for NAD(+). The substrate site is built by tyrosine 57 and arginine 60. 94–97 (QNID) is a binding site for NAD(+). The active-site Proton acceptor is the histidine 112. 2 residues coordinate Zn(2+): cysteine 120 and cysteine 139. Residues 179 to 181 (GTS), 205 to 207 (NLE), and alanine 223 contribute to the NAD(+) site.

It belongs to the sirtuin family. Class III subfamily. It depends on Zn(2+) as a cofactor.

Its subcellular location is the cytoplasm. The enzyme catalyses N(6)-acetyl-L-lysyl-[protein] + NAD(+) + H2O = 2''-O-acetyl-ADP-D-ribose + nicotinamide + L-lysyl-[protein]. The catalysed reaction is N(6)-succinyl-L-lysyl-[protein] + NAD(+) + H2O = 2''-O-succinyl-ADP-D-ribose + nicotinamide + L-lysyl-[protein]. In terms of biological role, NAD-dependent lysine deacetylase and desuccinylase that specifically removes acetyl and succinyl groups on target proteins. Modulates the activities of several proteins which are inactive in their acylated form. This is NAD-dependent protein deacylase from Vibrio cholerae serotype O1 (strain ATCC 39315 / El Tor Inaba N16961).